The chain runs to 664 residues: uncharacterized protein (664 aa).

The signal sequence occupies residues 1–35 (MGVSVLTFHVSLFLKRILSIAFFLLSLSTLLRIVN). Residues Asn-101 and Asn-138 are each glycosylated (N-linked (GlcNAc...) asparagine). Sel1-like repeat units follow at residues 141 to 178 (AFAN…KQGS) and 179 to 214 (LDAH…DHLF). N-linked (GlcNAc...) asparagine glycosylation is found at Asn-221, Asn-300, and Asn-371. Sel1-like repeat units follow at residues 337-372 (AQSC…TKND), 373-409 (SNSY…MNEN), 410-441 (PHAL…TQKS), and 442-477 (VISY…EAIR). N-linked (GlcNAc...) asparagine glycans are attached at residues Asn-454 and Asn-537. Sel1-like repeat units follow at residues 564 to 599 (IDAI…EQSS) and 601 to 636 (GMGL…SNQN).

This sequence belongs to the sel-1 family.

This is an uncharacterized protein from Schizosaccharomyces pombe (strain 972 / ATCC 24843) (Fission yeast).